Reading from the N-terminus, the 255-residue chain is uncharacterized protein (255 aa).

Residues 42–67 (ACSGSPPEPGKGRPDTTPEQEVPVTA) are disordered.

This is an uncharacterized protein from Mycobacterium tuberculosis (strain CDC 1551 / Oshkosh).